A 404-amino-acid polypeptide reads, in one-letter code: Photosynthetic reaction center cytochrome c subunit (404 aa).

Positions 1-22 are cleaved as a signal peptide; sequence MSPAQQLTLPAVIVVASVMLLG. Cys23 carries N-palmitoyl cysteine lipidation. Residue Cys23 is the site of S-diacylglycerol cysteine attachment. The heme site is built by Met94, Cys107, Cys110, His111, Met130, His144, Cys152, Cys155, His156, Met236, Cys247, Cys250, His251, Cys307, Cys310, and His311. The tract at residues 346–404 is disordered; sequence ASEAAPAAATEAAPEAPAQEVPAAEAVPAAAEPGAAEAAGSVEPAPVEEVAPAPAAQRL.

In terms of assembly, component of the photosynthetic reaction center composed of protein subunits L (PufL), M (PufM), H (PuhA) and cytochrome C (PufC). The reaction center interacts with light-harvesting antenna complex LH1. Post-translationally, binds 4 heme groups per subunit.

It localises to the cellular chromatophore membrane. In terms of biological role, the reaction center of purple bacteria contains a tightly bound cytochrome molecule which re-reduces the photo oxidized primary electron donor. The protein is Photosynthetic reaction center cytochrome c subunit of Thermochromatium tepidum (Chromatium tepidum).